A 238-amino-acid polypeptide reads, in one-letter code: Fibroblast growth factor-binding protein 1 (238 aa).

Positions 1-20 are cleaved as a signal peptide; that stretch reads MRIHGLILLSFLLLAAQVLS. The tract at residues 25–61 is disordered; it reads KTAKNVPDSTTEEDMSPSLGKARNKQRSRTSKSMTHG. 3 disulfide bridges follow: Cys-71–Cys-88, Cys-97–Cys-130, and Cys-106–Cys-142. Ser-164 carries an O-linked (GalNAc...) serine glycan. The sufficient for interaction with FGF2 and FGF2-induced effects stretch occupies residues 197–238; it reads KDSECLEDPDVLTQRKTALEFCGESWSSFCTFFLNMLQATSC. Cystine bridges form between Cys-201–Cys-238 and Cys-218–Cys-226.

The protein belongs to the fibroblast growth factor-binding protein family. In terms of assembly, found in a complex with FGFBP1, FGF1 and FGF2. Interacts with FGF1, FGF2, FGF7, FGF10, FGF22 and HSPG2. In terms of tissue distribution, expressed in gut, eye, thymus, skin, lung, tongue, Purkinje cells and cerebral chorioid plexus (at protein level).

The protein localises to the secreted. It localises to the extracellular space. The protein resides in the cell membrane. In terms of biological role, acts as a carrier protein that release fibroblast-binding factors (FGFs) from the extracellular matrix (EM) storage and thus enhance the mitogenic activity of FGFs. Enhances FGF2 signaling during tissue repair, angiogenesis and in tumor growth. In Rattus norvegicus (Rat), this protein is Fibroblast growth factor-binding protein 1 (Fgfbp1).